The chain runs to 492 residues: Adenylyltransferase and sulfurtransferase uba4 (492 aa).

Residues G99, D120, 127–131 (SNLHR), K144, and 188–189 (DN) contribute to the ATP site. Residues C237 and C240 each contribute to the Zn(2+) site. The active-site Glycyl thioester intermediate; for adenylyltransferase activity is the C254. Zn(2+) contacts are provided by C317 and C320. A Rhodanese domain is found at 378 to 490 (GSKEPTIIDV…WREQIDPDWP (113 aa)). The active-site Cysteine persulfide intermediate; for sulfurtransferase activity is the C445.

This sequence in the N-terminal section; belongs to the HesA/MoeB/ThiF family. UBA4 subfamily. It depends on Zn(2+) as a cofactor.

It localises to the cytoplasm. The protein localises to the cytosol. It catalyses the reaction [molybdopterin-synthase sulfur-carrier protein]-C-terminal Gly-Gly + ATP + H(+) = [molybdopterin-synthase sulfur-carrier protein]-C-terminal Gly-Gly-AMP + diphosphate. The enzyme catalyses [molybdopterin-synthase sulfur-carrier protein]-C-terminal Gly-Gly-AMP + S-sulfanyl-L-cysteinyl-[cysteine desulfurase] + AH2 = [molybdopterin-synthase sulfur-carrier protein]-C-terminal-Gly-aminoethanethioate + L-cysteinyl-[cysteine desulfurase] + A + AMP + 2 H(+). It participates in tRNA modification; 5-methoxycarbonylmethyl-2-thiouridine-tRNA biosynthesis. The protein operates within cofactor biosynthesis; molybdopterin biosynthesis. Functionally, plays a central role in 2-thiolation of mcm(5)S(2)U at tRNA wobble positions of cytosolic tRNA(Lys), tRNA(Glu) and tRNA(Gln). Also essential during biosynthesis of the molybdenum cofactor. Acts by mediating the C-terminal thiocarboxylation of sulfur carriers urm1 and mocs2a. Its N-terminus first activates urm1 and mocs2a as acyl-adenylates (-COAMP), then the persulfide sulfur on the catalytic cysteine is transferred to urm1 and mocs2a to form thiocarboxylation (-COSH) of their C-terminus. The reaction probably involves hydrogen sulfide that is generated from the persulfide intermediate and that acts as a nucleophile towards urm1 and mocs2a. Subsequently, a transient disulfide bond is formed. Does not use thiosulfate as sulfur donor; nfs1 probably acting as a sulfur donor for thiocarboxylation reactions. The protein is Adenylyltransferase and sulfurtransferase uba4 of Aspergillus clavatus (strain ATCC 1007 / CBS 513.65 / DSM 816 / NCTC 3887 / NRRL 1 / QM 1276 / 107).